Reading from the N-terminus, the 174-residue chain is Transcriptional repressor NrdR (174 aa).

The segment at 3–34 (CPICHFPETDVIDTRKLYEGEVIRRRRKCRAC) is a zinc-finger region. In terms of domain architecture, ATP-cone spans 49–139 (LMVVKKDGTR…VYRSFADIGK (91 aa)). The disordered stretch occupies residues 151–174 (EGTRNGHSSAATTDQGTTDNHSRM). Polar residues predominate over residues 155-174 (NGHSSAATTDQGTTDNHSRM).

Belongs to the NrdR family. The cofactor is Zn(2+).

Functionally, negatively regulates transcription of bacterial ribonucleotide reductase nrd genes and operons by binding to NrdR-boxes. The sequence is that of Transcriptional repressor NrdR from Chloroflexus aggregans (strain MD-66 / DSM 9485).